A 353-amino-acid chain; its full sequence is Chorismate synthase (353 aa).

The NADP(+) site is built by Arg48 and Arg54. Residues 125 to 127 (RSS), 238 to 239 (NA), Gly278, 293 to 297 (KPTSS), and Arg319 contribute to the FMN site.

Belongs to the chorismate synthase family. In terms of assembly, homotetramer. It depends on FMNH2 as a cofactor.

It catalyses the reaction 5-O-(1-carboxyvinyl)-3-phosphoshikimate = chorismate + phosphate. It functions in the pathway metabolic intermediate biosynthesis; chorismate biosynthesis; chorismate from D-erythrose 4-phosphate and phosphoenolpyruvate: step 7/7. In terms of biological role, catalyzes the anti-1,4-elimination of the C-3 phosphate and the C-6 proR hydrogen from 5-enolpyruvylshikimate-3-phosphate (EPSP) to yield chorismate, which is the branch point compound that serves as the starting substrate for the three terminal pathways of aromatic amino acid biosynthesis. This reaction introduces a second double bond into the aromatic ring system. The chain is Chorismate synthase from Bordetella bronchiseptica (strain ATCC BAA-588 / NCTC 13252 / RB50) (Alcaligenes bronchisepticus).